Here is a 283-residue protein sequence, read N- to C-terminus: Probable endonuclease 4 (283 aa).

Zn(2+)-binding residues include His-69, His-109, Glu-145, Asp-179, His-182, His-216, Asp-229, His-231, and Glu-261.

Belongs to the AP endonuclease 2 family. Zn(2+) serves as cofactor.

The catalysed reaction is Endonucleolytic cleavage to 5'-phosphooligonucleotide end-products.. Functionally, endonuclease IV plays a role in DNA repair. It cleaves phosphodiester bonds at apurinic or apyrimidinic (AP) sites, generating a 3'-hydroxyl group and a 5'-terminal sugar phosphate. This is Probable endonuclease 4 from Desulfosudis oleivorans (strain DSM 6200 / JCM 39069 / Hxd3) (Desulfococcus oleovorans).